The chain runs to 535 residues: CTP synthase (535 aa).

Positions 1-267 (MTKYIFVTGG…DQIVCDHLKL (267 aa)) are amidoligase domain. A CTP-binding site is contributed by Ser-13. Position 13 (Ser-13) interacts with UTP. 14 to 19 (SLGKGI) lines the ATP pocket. Position 54 (Tyr-54) interacts with L-glutamine. Residue Asp-71 coordinates ATP. Residues Asp-71 and Glu-141 each coordinate Mg(2+). CTP is bound by residues 148–150 (DIE), 188–193 (KTKPTQ), and Lys-224. UTP is bound by residues 188–193 (KTKPTQ) and Lys-224. Position 240–242 (240–242 (RDA)) interacts with ATP. A Glutamine amidotransferase type-1 domain is found at 292 to 534 (KIALVGKYVE…VKASLTNKES (243 aa)). Residue Gly-354 participates in L-glutamine binding. Residue Cys-381 is the Nucleophile; for glutamine hydrolysis of the active site. L-glutamine-binding positions include 382–385 (LGMQ), Glu-405, and Arg-462. Active-site residues include His-507 and Glu-509.

This sequence belongs to the CTP synthase family. Homotetramer.

It catalyses the reaction UTP + L-glutamine + ATP + H2O = CTP + L-glutamate + ADP + phosphate + 2 H(+). The catalysed reaction is L-glutamine + H2O = L-glutamate + NH4(+). The enzyme catalyses UTP + NH4(+) + ATP = CTP + ADP + phosphate + 2 H(+). The protein operates within pyrimidine metabolism; CTP biosynthesis via de novo pathway; CTP from UDP: step 2/2. With respect to regulation, allosterically activated by GTP, when glutamine is the substrate; GTP has no effect on the reaction when ammonia is the substrate. The allosteric effector GTP functions by stabilizing the protein conformation that binds the tetrahedral intermediate(s) formed during glutamine hydrolysis. Inhibited by the product CTP, via allosteric rather than competitive inhibition. Catalyzes the ATP-dependent amination of UTP to CTP with either L-glutamine or ammonia as the source of nitrogen. Regulates intracellular CTP levels through interactions with the four ribonucleotide triphosphates. This chain is CTP synthase, found in Bacillus anthracis (strain A0248).